Here is a 91-residue protein sequence, read N- to C-terminus: Bombyxin B-1 homolog (91 aa).

A signal peptide spans 1–19; the sequence is MKVSMFVVIVLCMVAASSA. 3 disulfides stabilise this stretch: C27/C78, C39/C91, and C77/C82. The propeptide at 49-69 is c peptide like; the sequence is SGAQYARYGWQSPESREGARG.

It belongs to the insulin family. In terms of assembly, heterodimer of a B chain and an A chain linked by two disulfide bonds.

The protein resides in the secreted. Functionally, brain peptide responsible for activation of prothoracic glands to produce ecdysone in insects. In Samia cynthia (Ailanthus silkmoth), this protein is Bombyxin B-1 homolog (SBXB1).